We begin with the raw amino-acid sequence, 160 residues long: Transcriptional repressor NrdR (160 aa).

The segment at 3-34 is a zinc-finger region; it reads CPYCQYEDTQVKDSRPAEEGAVIRRRRVCSVC. Positions 49-139 constitute an ATP-cone domain; sequence LLITKKNGRC…VYRDFRNASD (91 aa).

It belongs to the NrdR family. The cofactor is Zn(2+).

Its function is as follows. Negatively regulates transcription of bacterial ribonucleotide reductase nrd genes and operons by binding to NrdR-boxes. The polypeptide is Transcriptional repressor NrdR (Bartonella tribocorum (strain CIP 105476 / IBS 506)).